The chain runs to 179 residues: MAKLHDYYKDEVVSKLMTEFNYNSVMQVPRVEKITLNMGVGEAIADKKLLDNAAADLTAISGQKPLITKARKSVAGFKIRQGYPIGCKVTLRGERMWEFLERLISIAVPRIRDFRGLSAKSFDGRGNYSMGVREQIIFPEIDYDKVDRVRGLDITITTTANSDEEGRALLAAFDFPFRK.

This sequence belongs to the universal ribosomal protein uL5 family. As to quaternary structure, part of the 50S ribosomal subunit; part of the 5S rRNA/L5/L18/L25 subcomplex. Contacts the 5S rRNA and the P site tRNA. Forms a bridge to the 30S subunit in the 70S ribosome.

Its function is as follows. This is one of the proteins that bind and probably mediate the attachment of the 5S RNA into the large ribosomal subunit, where it forms part of the central protuberance. In the 70S ribosome it contacts protein S13 of the 30S subunit (bridge B1b), connecting the 2 subunits; this bridge is implicated in subunit movement. Contacts the P site tRNA; the 5S rRNA and some of its associated proteins might help stabilize positioning of ribosome-bound tRNAs. In Enterobacter sp. (strain 638), this protein is Large ribosomal subunit protein uL5.